Consider the following 209-residue polypeptide: Small ribosomal subunit protein mS23 (209 aa).

Belongs to the mitochondrion-specific ribosomal protein mS23 family. As to quaternary structure, component of the mitochondrial small ribosomal subunit.

It localises to the mitochondrion. The polypeptide is Small ribosomal subunit protein mS23 (rsm25) (Sclerotinia sclerotiorum (strain ATCC 18683 / 1980 / Ss-1) (White mold)).